A 284-amino-acid chain; its full sequence is Bifunctional protein FolD (284 aa).

NADP(+)-binding positions include 166 to 168 (GAS) and isoleucine 232.

Belongs to the tetrahydrofolate dehydrogenase/cyclohydrolase family. In terms of assembly, homodimer.

It carries out the reaction (6R)-5,10-methylene-5,6,7,8-tetrahydrofolate + NADP(+) = (6R)-5,10-methenyltetrahydrofolate + NADPH. The enzyme catalyses (6R)-5,10-methenyltetrahydrofolate + H2O = (6R)-10-formyltetrahydrofolate + H(+). The protein operates within one-carbon metabolism; tetrahydrofolate interconversion. Catalyzes the oxidation of 5,10-methylenetetrahydrofolate to 5,10-methenyltetrahydrofolate and then the hydrolysis of 5,10-methenyltetrahydrofolate to 10-formyltetrahydrofolate. This chain is Bifunctional protein FolD, found in Pseudomonas fluorescens (strain ATCC BAA-477 / NRRL B-23932 / Pf-5).